Here is a 103-residue protein sequence, read N- to C-terminus: Large ribosomal subunit protein bL21 (103 aa).

It belongs to the bacterial ribosomal protein bL21 family. In terms of assembly, part of the 50S ribosomal subunit. Contacts protein L20.

Functionally, this protein binds to 23S rRNA in the presence of protein L20. The sequence is that of Large ribosomal subunit protein bL21 from Idiomarina loihiensis (strain ATCC BAA-735 / DSM 15497 / L2-TR).